An 874-amino-acid polypeptide reads, in one-letter code: Alanine--tRNA ligase (874 aa).

Positions 564, 568, 665, and 669 each coordinate Zn(2+).

The protein belongs to the class-II aminoacyl-tRNA synthetase family. Zn(2+) is required as a cofactor.

Its subcellular location is the cytoplasm. It catalyses the reaction tRNA(Ala) + L-alanine + ATP = L-alanyl-tRNA(Ala) + AMP + diphosphate. Catalyzes the attachment of alanine to tRNA(Ala) in a two-step reaction: alanine is first activated by ATP to form Ala-AMP and then transferred to the acceptor end of tRNA(Ala). Also edits incorrectly charged Ser-tRNA(Ala) and Gly-tRNA(Ala) via its editing domain. This Burkholderia orbicola (strain MC0-3) protein is Alanine--tRNA ligase.